The sequence spans 449 residues: Zinc finger and BTB domain-containing protein 14 (449 aa).

The BTB domain occupies 36 to 102 (CDIAIVVEDV…MYTAKISVKK (67 aa)). K46 participates in a covalent cross-link: Glycyl lysine isopeptide (Lys-Gly) (interchain with G-Cter in SUMO2). The short motif at 50–66 (HRCVLAACSTYFKKLFK) is the Nuclear localization signal element. Residues 156–194 (ADAQDDDVEEIGDQDDSPSDDTVEGTPPSQEDGKSPTTT) are disordered. The span at 157-178 (DAQDDDVEEIGDQDDSPSDDTV) shows a compositional bias: acidic residues. Glycyl lysine isopeptide (Lys-Gly) (interchain with G-Cter in SUMO2) cross-links involve residues K203 and K249. 5 C2H2-type zinc fingers span residues 277 to 304 (IACQ…ADRP), 305 to 332 (FVCE…GYKP), 333 to 360 (YSCE…NERP), 361 to 388 (FACH…GEKP), and 389 to 417 (FVCG…ERKQ). A compositionally biased stretch (basic and acidic residues) spans 405-417 (KRHENNMHSERKQ). Residues 405–424 (KRHENNMHSERKQVTPSAIQ) form a disordered region.

Belongs to the krueppel C2H2-type zinc-finger protein family. Interacts with ZBTB21. As to expression, ubiquitous.

It localises to the nucleus. In terms of biological role, transcriptional activator of the dopamine transporter (DAT), binding it's promoter at the consensus sequence 5'-CCTGCACAGTTCACGGA-3'. Binds to 5'-d(GCC)(n)-3' trinucleotide repeats in promoter regions and acts as a repressor of the FMR1 gene. Transcriptional repressor of MYC and thymidine kinase promoters. The polypeptide is Zinc finger and BTB domain-containing protein 14 (Zbtb14) (Mus musculus (Mouse)).